The primary structure comprises 478 residues: Keratin, type II cytoskeletal 8 (478 aa).

The interval 1–97 (MSIRVTQKSY…DPNIQAVRTQ (97 aa)) is head. S9 is modified (phosphoserine; by PKC/PRKCE). Residue K11 forms a Glycyl lysine isopeptide (Lys-Gly) (interchain with G-Cter in SUMO2) linkage. 4 positions are modified to phosphoserine: S13, S15, S21, and S22. The interval 16–44 (APRSFSSRSYTSGPGSRISSSAFSRVGSS) is disordered. Position 23 is an omega-N-methylarginine (R23). Phosphoserine; by PKC/PRKCE is present on S24. At T26 the chain carries Phosphothreonine. Phosphoserine is present on residues S27 and S31. An Omega-N-methylarginine modification is found at R32. Phosphoserine occurs at positions 34 and 39. An Omega-N-methylarginine modification is found at R40. Phosphoserine is present on residues S43 and S44. An Asymmetric dimethylarginine; alternate modification is found at R48. Position 48 is an omega-N-methylarginine; alternate (R48). S81 carries the post-translational modification Phosphoserine; by MAPK. The interval 98-133 (EKEQIKTLNNKFASFIDKVRHLEQQNKVLETKWNLL) is coil 1A. Positions 98–409 (EKEQIKTLNN…KLLEGEESRL (312 aa)) constitute an IF rod domain. K108 carries the post-translational modification N6-malonyllysine. Residues K129 and K137 each participate in a glycyl lysine isopeptide (Lys-Gly) (interchain with G-Cter in SUMO2) cross-link. The linker 1 stretch occupies residues 134 to 150 (QQQKTARSNIDNMFESY). The coil 1B stretch occupies residues 151–242 (INNLRRQLET…QLYEEEIREM (92 aa)). K204 is covalently cross-linked (Glycyl lysine isopeptide (Lys-Gly) (interchain with G-Cter in SUMO1); alternate). K204 participates in a covalent cross-link: Glycyl lysine isopeptide (Lys-Gly) (interchain with G-Cter in SUMO2); alternate. Position 214 is an N6-acetyllysine (K214). A Phosphotyrosine modification is found at Y235. Residues 243-266 (QSQISDTSVVLEMDNNRNLDLDGI) form a linker 12 region. A coil 2 region spans residues 267-405 (IAEVKAQYEE…ATYRKLLEGE (139 aa)). The interval 268-389 (AEVKAQYEEI…EYQELMNVKL (122 aa)) is necessary for interaction with PNN. K271 is covalently cross-linked (Glycyl lysine isopeptide (Lys-Gly) (interchain with G-Cter in SUMO2)). S281 carries the post-translational modification Phosphoserine. K292 is covalently cross-linked (Glycyl lysine isopeptide (Lys-Gly) (interchain with G-Cter in SUMO2)). Residue K302 forms a Glycyl lysine isopeptide (Lys-Gly) (interchain with G-Cter in SUMO2); alternate linkage. K302 is modified (N6-acetyllysine; alternate). K311 participates in a covalent cross-link: Glycyl lysine isopeptide (Lys-Gly) (interchain with G-Cter in SUMO2). A Glycyl lysine isopeptide (Lys-Gly) (interchain with G-Cter in SUMO2); alternate cross-link involves residue K332. K332 carries the N6-acetyllysine; alternate modification. Position 337 is a phosphoserine (S337). Residue K400 forms a Glycyl lysine isopeptide (Lys-Gly) (interchain with G-Cter in SUMO2) linkage. A tail region spans residues 406 to 478 (ESRLESGMQN…VSESSDVLSK (73 aa)). S407, S411, S417, S424, and S433 each carry phosphoserine. Residue K467 forms a Glycyl lysine isopeptide (Lys-Gly) (interchain with G-Cter in SUMO1); alternate linkage. A Glycyl lysine isopeptide (Lys-Gly) (interchain with G-Cter in SUMO2); alternate cross-link involves residue K467. 4 positions are modified to phosphoserine: S470, S472, S473, and S477.

Belongs to the intermediate filament family. As to quaternary structure, heterotetramer of two type I and two type II keratins. Forms a heterodimer with KRT18. Associates with KRT20. Interacts with PNN. When associated with KRT19, interacts with DMD. Interacts with TCHP. Interacts with APEX1. Interacts with GPER1. Interacts with EPPK1. Interacts with PKP1 and PKP2. Post-translationally, O-glycosylated. O-GlcNAcylation at multiple sites increases solubility, and decreases stability by inducing proteasomal degradation. O-glycosylated (O-GlcNAcylated), in a cell cycle-dependent manner. As to expression, expressed in bladder, liver, exocervix and (in very low amounts) esophagus.

It is found in the cytoplasm. Its subcellular location is the nucleus. The protein localises to the nucleoplasm. The protein resides in the nucleus matrix. Functionally, together with KRT19, helps to link the contractile apparatus to dystrophin at the costameres of striated muscle. In Bos taurus (Bovine), this protein is Keratin, type II cytoskeletal 8 (KRT8).